The chain runs to 171 residues: Transcription antitermination protein NusB (171 aa).

The protein belongs to the NusB family.

Functionally, involved in transcription antitermination. Required for transcription of ribosomal RNA (rRNA) genes. Binds specifically to the boxA antiterminator sequence of the ribosomal RNA (rrn) operons. This Brucella ovis (strain ATCC 25840 / 63/290 / NCTC 10512) protein is Transcription antitermination protein NusB.